Reading from the N-terminus, the 366-residue chain is MAEKEVTPLTAVKVEALVVMKIIKHCSQVFPTTATGSIVGMDVDGVLEITNTFPFPVVEVPPESHFDNAAPNPAAAAPRAKANTVYQAEMIRMLREVNVDANNVGWYTSANMGNFVNMNVIENQFFYQKEMNERTVALVHDPSRSAQGSLSLRAFRLSPKFMAAFKDNKFTSDELQKSNLKYQDILVELPVEIHNSHLITSFIHQLQNQTQATPAEIPTSLATLESSPFAKQTILAPNFDNLSLSIDPFLEKNCDLLLDSIETHHTETSNFQYYQRSLAREQAKITAWQAKRKAENATRATLKQPPLPEDEWQRLFKLPQEPSRLDSMLNSRQVEQYARQIDSFVSSTTGKMFAVKGNLLPSEIAK.

The MPN domain occupies 12–161 (VKVEALVVMK…LRAFRLSPKF (150 aa)).

This sequence belongs to the eIF-3 subunit H family. Component of the eukaryotic translation initiation factor 3 (eIF-3) complex.

The protein resides in the cytoplasm. Its function is as follows. Component of the eukaryotic translation initiation factor 3 (eIF-3) complex, which is involved in protein synthesis of a specialized repertoire of mRNAs and, together with other initiation factors, stimulates binding of mRNA and methionyl-tRNAi to the 40S ribosome. The eIF-3 complex specifically targets and initiates translation of a subset of mRNAs involved in cell proliferation. The polypeptide is Eukaryotic translation initiation factor 3 subunit H (Emericella nidulans (strain FGSC A4 / ATCC 38163 / CBS 112.46 / NRRL 194 / M139) (Aspergillus nidulans)).